A 349-amino-acid polypeptide reads, in one-letter code: UDP-3-O-acylglucosamine N-acyltransferase (349 aa).

Residue histidine 248 is the Proton acceptor of the active site.

The protein belongs to the transferase hexapeptide repeat family. LpxD subfamily. As to quaternary structure, homotrimer.

The catalysed reaction is a UDP-3-O-[(3R)-3-hydroxyacyl]-alpha-D-glucosamine + a (3R)-hydroxyacyl-[ACP] = a UDP-2-N,3-O-bis[(3R)-3-hydroxyacyl]-alpha-D-glucosamine + holo-[ACP] + H(+). It participates in bacterial outer membrane biogenesis; LPS lipid A biosynthesis. Its function is as follows. Catalyzes the N-acylation of UDP-3-O-acylglucosamine using 3-hydroxyacyl-ACP as the acyl donor. Is involved in the biosynthesis of lipid A, a phosphorylated glycolipid that anchors the lipopolysaccharide to the outer membrane of the cell. This chain is UDP-3-O-acylglucosamine N-acyltransferase, found in Colwellia psychrerythraea (strain 34H / ATCC BAA-681) (Vibrio psychroerythus).